A 256-amino-acid chain; its full sequence is 5-oxoprolinase subunit A (256 aa).

This sequence belongs to the LamB/PxpA family. Forms a complex composed of PxpA, PxpB and PxpC.

The enzyme catalyses 5-oxo-L-proline + ATP + 2 H2O = L-glutamate + ADP + phosphate + H(+). Its function is as follows. Catalyzes the cleavage of 5-oxoproline to form L-glutamate coupled to the hydrolysis of ATP to ADP and inorganic phosphate. This chain is 5-oxoprolinase subunit A, found in Cutibacterium acnes (strain DSM 16379 / KPA171202) (Propionibacterium acnes).